The chain runs to 440 residues: Diaminopimelate decarboxylase (440 aa).

K61 is modified (N6-(pyridoxal phosphate)lysine). Pyridoxal 5'-phosphate-binding positions include G234 and 275 to 278; that span reads EPGR. Residues R278, R314, and Y318 each coordinate substrate. C348 serves as the catalytic Proton donor. Substrate is bound by residues E349 and Y384. Y384 contacts pyridoxal 5'-phosphate. The segment covering 421–431 has biased composition (low complexity); that stretch reads LAPELEPGPAL. Residues 421-440 are disordered; sequence LAPELEPGPALSPRPSRDPR.

Belongs to the Orn/Lys/Arg decarboxylase class-II family. LysA subfamily. Homodimer. It depends on pyridoxal 5'-phosphate as a cofactor.

It carries out the reaction meso-2,6-diaminopimelate + H(+) = L-lysine + CO2. It functions in the pathway amino-acid biosynthesis; L-lysine biosynthesis via DAP pathway; L-lysine from DL-2,6-diaminopimelate: step 1/1. In terms of biological role, specifically catalyzes the decarboxylation of meso-diaminopimelate (meso-DAP) to L-lysine. This Streptomyces coelicolor (strain ATCC BAA-471 / A3(2) / M145) protein is Diaminopimelate decarboxylase.